The chain runs to 52 residues: Alpha-crystallin B chain (52 aa).

Belongs to the small heat shock protein (HSP20) family. As to quaternary structure, homodimer. Aggregates with homologous proteins, including alpha-A-crystallin and the small heat shock protein HSPB1, to form large heteromeric complexes.

Functionally, may contribute to the transparency and refractive index of the lens. This Turdus merula (Common blackbird) protein is Alpha-crystallin B chain (CRYAB).